Here is a 384-residue protein sequence, read N- to C-terminus: Early estrogen-induced gene 1 protein (384 aa).

The C2 NT-type domain maps to 2–145 (AFLMKKKKFK…ILKVTIGMFL (144 aa)). Positions 129–138 (NTRQDNSILK) are required for interaction with TNFRSF11A/RANK. Positions 173-315 (LTCKGGGTSS…RRKKDSVESH (143 aa)) are disordered. Residues 183 to 193 (GGSSTNSLTGS) show a composition bias toward low complexity. Residues 227-254 (SRNSSYASQQSKISGYSTEHSRSSSLSD) show a composition bias toward polar residues. Composition is skewed to basic and acidic residues over residues 280–292 (GSEREHRPPEKPP) and 299–315 (HLSDRSFRRKKDSVESH).

The protein belongs to the EEIG family. As to quaternary structure, part of a complex composed of EEIG1, TNFRSF11A/RANK, PLCG2, GAB2, TEC and BTK; complex formation increases in the presence of TNFSF11/RANKL. Interacts with PRDM1/BLIMP1; following TNFSF11/RANKL stimulation in bone marrow-derived macrophages, the interaction promotes the binding of PRDM1/BLIMP1 to the gene promoter of IRF8.

It is found in the nucleus. The protein resides in the cytoplasm. It localises to the membrane raft. Functionally, key component of TNFSF11/RANKL- and TNF-induced osteoclastogenesis pathways, thereby mediates bone resorption in pathological bone loss conditions. Required for TNFSF11/RANKL-induced osteoclastogenesis via its interaction with TNFRSF11A/RANK, thereby facilitates the downsteam transcription of NFATC1 and activation of PLCG2. Facilitates recruitment of the transcriptional repressor PRDM1/BLIMP1 to the promoter of the anti-osteoclastogenesis gene IRF8, thereby resulting in transcription of osteoclast differentiation factors. May play a role in estrogen action. This chain is Early estrogen-induced gene 1 protein, found in Homo sapiens (Human).